Consider the following 421-residue polypeptide: MWRWSTGVRTMLGYAMCFLALGSALTVRLHSTRTNLPQYLTREIGDDEFEELLRSSASAGHKWHVEQFVDGSRCYVPETEQNMAPVPDDLLERGIKLVEEATVGKKLEYLPISYWGYKFINSELNKTVIQHKDQHQVLLGSMVKADPQTVQHSLERDEDSYYISERFGDGDLCSLLEEDRTVEVQYRCKYDTPLEIILDLKEYETCRYTMLVSIPSLCELPEFGPYTRQTPANTIYCTAPATPEFNIATLVEAYKPTFLGHGFYHLAPHANLTHKETTAMLMYHQQPIPGNEEDDGTMDSAFIKHSTMAYMQLLEMGLLNGPDGLPFSEEGNFTVYAKVIGFDGGLITVTRFQISHGEVIIDHVVPEVLEDMEQGNSEDYEQQAPEQLDEEEAELTSQSDDPAIMRVHLQEFITPEYDAIE.

The signal sequence occupies residues 1-26 (MWRWSTGVRTMLGYAMCFLALGSALT). Residues 99 to 220 (EEATVGKKLE…LVSIPSLCEL (122 aa)) enclose the MRH domain. Residue Trp115 participates in a mannooligosaccharide derivative binding. Residue Asn125 is glycosylated (N-linked (GlcNAc...) asparagine). 2 cysteine pairs are disulfide-bonded: Cys173–Cys206 and Cys188–Cys218. Positions 180, 202, and 208 each coordinate a mannooligosaccharide derivative. N-linked (GlcNAc...) asparagine glycosylation is found at Asn271 and Asn332. Residues 375–394 (GNSEDYEQQAPEQLDEEEAE) show a composition bias toward acidic residues. Positions 375–403 (GNSEDYEQQAPEQLDEEEAELTSQSDDPA) are disordered.

Belongs to the OS-9 family. As to quaternary structure, interacts with missfolded ER lumenal proteins.

It is found in the endoplasmic reticulum membrane. In terms of biological role, lectin involved in the quality control of the secretory pathway. As a member of the endoplasmic reticulum-associated degradation lumenal (ERAD-L) surveillance system, targets misfolded endoplasmic reticulum lumenal glycoproteins for degradation. This Eremothecium gossypii (strain ATCC 10895 / CBS 109.51 / FGSC 9923 / NRRL Y-1056) (Yeast) protein is Protein OS-9 homolog (YOS9).